The sequence spans 363 residues: Adenosine deaminase (363 aa).

Residues histidine 42 and histidine 44 each coordinate Zn(2+). Residues 44–46 (HLD), aspartate 172, and glycine 201 contribute to the a purine D-ribonucleoside site. Positions 170–184 (IGDTGHEAANIKASA) are gating helix loop; regulates binding affinity for substrates and thus substrate selectivity. Histidine 226 lines the Zn(2+) pocket. The a purine D-ribonucleoside site is built by glutamate 229, histidine 253, and aspartate 310. Aspartate 310 contacts Zn(2+).

It belongs to the metallo-dependent hydrolases superfamily. Adenosine and AMP deaminases family. Zn(2+) is required as a cofactor.

The catalysed reaction is adenosine + H2O + H(+) = inosine + NH4(+). It carries out the reaction S-methyl-5'-thioadenosine + H2O + H(+) = S-methyl-5'-thioinosine + NH4(+). It functions in the pathway purine metabolism; purine nucleoside salvage. Its activity is regulated as follows. Inhibited by coformycin and methylthiocoformycin (MT-coformycin). Functionally, catalyzes the hydrolytic deamination of adenosine to produce inosine. Unlike mammalian adenosine deaminases, also catalyzes the deamination of 5'-methylthioadenosine (MTA), a by-product of polyamine biosynthesis, to produce 5'-methylthioinosine (MTI). Plays an essential role in the purine salvage pathway which allows the parasite to use host cell purines for the synthesis of nucleic acids. This Plasmodium cynomolgi (strain B) protein is Adenosine deaminase.